The chain runs to 411 residues: GPI-anchor transamidase (411 aa).

The signal sequence occupies residues 1 to 22 (MRIAMHLPLLLLYIFLLPLSGA). The Lumenal portion of the chain corresponds to 23–376 (NNTDAAHEVI…DIDSNECFFT (354 aa)). Residues His-157 and Cys-199 contribute to the active site. N-linked (GlcNAc...) asparagine glycans are attached at residues Asn-256 and Asn-346. The chain crosses the membrane as a helical span at residues 377 to 397 (SFKQSATIILALIVTILWFML). Over 398–411 (RGNTAKATYDLYTN) the chain is Cytoplasmic.

It belongs to the peptidase C13 family. In terms of assembly, forms a complex with CDC91, GPI16, GPI17 and GAA1. Post-translationally, the disulfide bond between GPI8 and GPI16 is important for normal enzyme activity.

It is found in the endoplasmic reticulum membrane. The protein operates within glycolipid biosynthesis; glycosylphosphatidylinositol-anchor biosynthesis. Mediates GPI anchoring in the endoplasmic reticulum, by replacing a protein's C-terminal GPI attachment signal peptide with a pre-assembled GPI. During this transamidation reaction, the GPI transamidase forms a carbonyl intermediate with the substrate protein. In Saccharomyces cerevisiae (strain ATCC 204508 / S288c) (Baker's yeast), this protein is GPI-anchor transamidase (GPI8).